We begin with the raw amino-acid sequence, 360 residues long: Tubulin-like protein CetZ2 (360 aa).

Residues 10-14 (QAGGK), 65-66 (GG), 106-108 (GSG), E138, N165, and N183 each bind GTP. Over residues 334–354 (EAIDKAETEPREDPKGMWHSD) the composition is skewed to basic and acidic residues. The disordered stretch occupies residues 334-360 (EAIDKAETEPREDPKGMWHSDDLDDLL).

This sequence belongs to the CetZ family.

Its subcellular location is the cytoplasm. Its function is as follows. Involved in cell shape control. The chain is Tubulin-like protein CetZ2 from Haloferax volcanii (strain ATCC 29605 / DSM 3757 / JCM 8879 / NBRC 14742 / NCIMB 2012 / VKM B-1768 / DS2) (Halobacterium volcanii).